Reading from the N-terminus, the 65-residue chain is Large ribosomal subunit protein bL35 (65 aa).

It belongs to the bacterial ribosomal protein bL35 family.

The sequence is that of Large ribosomal subunit protein bL35 from Sodalis glossinidius (strain morsitans).